A 480-amino-acid chain; its full sequence is Zinc finger protein ztf-16 (480 aa).

A C2H2-type 1 zinc finger spans residues 5 to 27; it reads NACTECGFTTTVFSEFQGHIEKH. The segment at 25-75 is disordered; sequence EKHENEHSRSSSGEMSNSQTIEWGDGIQSSTPSPRSTPPSDPTPSPDSDEH. Residues 34-45 show a composition bias toward polar residues; sequence SSSGEMSNSQTI. Positions 59–69 are enriched in pro residues; it reads RSTPPSDPTPS. 5 consecutive C2H2-type zinc fingers follow at residues 103 to 125, 133 to 155, 161 to 183, 190 to 215, and 223 to 246; these read HVCP…LEAH, YQCD…RMRH, YECR…SMTH, FDCP…EETH, and ASCK…QTRH. Disordered regions lie at residues 243-275, 290-311, and 376-417; these read QTRH…MDPA, EFSP…DKIP, and TSSS…KEDE. Basic and acidic residues predominate over residues 244-259; that stretch reads TRHDDSESSPKKENTP. Composition is skewed to low complexity over residues 292–305 and 376–403; these read SPPN…STSS and TSSS…SLSL. A compositionally biased stretch (basic and acidic residues) spans 404–413; sequence TEKEKSPTPE. C2H2-type zinc fingers lie at residues 420 to 442 and 448 to 472; these read VECC…KSLH and FKCA…FADH.

Belongs to the Ikaros C2H2-type zinc-finger protein family. Expressed in the somatic gonad, hypodermis and cells in the head and tail. Expressed in amphid and phasmid sheath glia, amphid and phasmid socket glia, and in neurons in the head.

Its subcellular location is the nucleus. Its function is as follows. Positively regulates the expression of ver-1 in the amphid sheath glia of amphid sensory neurons. Together with ehn-3, plays a role in somatic gonad development and is required for proper gonadal primordium assembly and somatic gonad precursor cell morphology. The sequence is that of Zinc finger protein ztf-16 from Caenorhabditis elegans.